Reading from the N-terminus, the 444-residue chain is Signal recognition particle 54 kDa protein (444 aa).

GTP-binding positions include 106 to 113, 187 to 191, and 245 to 248; these read GLQGSGKT, DTAGR, and SKLD.

This sequence belongs to the GTP-binding SRP family. SRP54 subfamily. As to quaternary structure, part of the signal recognition particle protein translocation system, which is composed of SRP and FtsY. Archaeal SRP consists of a 7S RNA molecule of 300 nucleotides and two protein subunits: SRP54 and SRP19.

It is found in the cytoplasm. It catalyses the reaction GTP + H2O = GDP + phosphate + H(+). In terms of biological role, involved in targeting and insertion of nascent membrane proteins into the cytoplasmic membrane. Binds to the hydrophobic signal sequence of the ribosome-nascent chain (RNC) as it emerges from the ribosomes. The SRP-RNC complex is then targeted to the cytoplasmic membrane where it interacts with the SRP receptor FtsY. The protein is Signal recognition particle 54 kDa protein of Methanosphaera stadtmanae (strain ATCC 43021 / DSM 3091 / JCM 11832 / MCB-3).